The following is a 339-amino-acid chain: Ferredoxin--NADP reductase (339 aa).

7 residues coordinate FAD: D36, Q44, Y49, V89, F123, D290, and T331.

The protein belongs to the ferredoxin--NADP reductase type 2 family. In terms of assembly, homodimer. It depends on FAD as a cofactor.

It carries out the reaction 2 reduced [2Fe-2S]-[ferredoxin] + NADP(+) + H(+) = 2 oxidized [2Fe-2S]-[ferredoxin] + NADPH. In Acidiphilium cryptum (strain JF-5), this protein is Ferredoxin--NADP reductase.